Reading from the N-terminus, the 1273-residue chain is DNA polymerase 037L (1273 aa).

Residues 679-837 adopt a coiled-coil conformation; it reads IRKNAITEEL…ENKSKEDIDE (159 aa).

Belongs to the DNA polymerase type-B family.

The enzyme catalyses DNA(n) + a 2'-deoxyribonucleoside 5'-triphosphate = DNA(n+1) + diphosphate. DNA-directed DNA polymerase involved in viral DNA replication. The protein is DNA polymerase 037L (DPOL) of Invertebrate iridescent virus 6 (IIV-6).